Consider the following 59-residue polypeptide: Small ribosomal subunit protein bS21A (59 aa).

This sequence belongs to the bacterial ribosomal protein bS21 family.

The protein is Small ribosomal subunit protein bS21A of Gloeobacter violaceus (strain ATCC 29082 / PCC 7421).